Here is a 511-residue protein sequence, read N- to C-terminus: Alpha-amylase 1A (511 aa).

The first 15 residues, 1 to 15, serve as a signal peptide directing secretion; the sequence is MKLFWLLFTIGFCWA. Pyrrolidone carboxylic acid is present on Q16. Disulfide bonds link C43-C101, C85-C130, and C156-C175. Ca(2+)-binding residues include N115, R173, and D182. Residue R210 participates in chloride binding. Residue D212 is the Nucleophile of the active site. H216 is a Ca(2+) binding site. The active-site Proton donor is the E248. Chloride is bound by residues N313 and R352. N365 bears the Deamidated asparagine; partial mark. The cysteines at positions 393 and 399 are disulfide-linked. A Deamidated asparagine; partial; alternate modification is found at N427. N-linked (GlcNAc...) asparagine glycosylation occurs at N427. An intrachain disulfide couples C465 to C477. A Deamidated asparagine; partial modification is found at N474. Residue N476 is glycosylated (N-linked (GlcNAc...) asparagine).

The protein belongs to the glycosyl hydrolase 13 family. In terms of assembly, monomer. Ca(2+) is required as a cofactor. Chloride serves as cofactor.

It localises to the secreted. It carries out the reaction Endohydrolysis of (1-&gt;4)-alpha-D-glucosidic linkages in polysaccharides containing three or more (1-&gt;4)-alpha-linked D-glucose units.. In terms of biological role, calcium-binding enzyme that initiates starch digestion in the oral cavity. Catalyzes the hydrolysis of internal (1-&gt;4)-alpha-D-glucosidic bonds, yielding a mixture of maltose, isomaltose, small amounts of glucose as well as small linear and branched oligosaccharides called dextrins. In Homo sapiens (Human), this protein is Alpha-amylase 1A.